We begin with the raw amino-acid sequence, 606 residues long: Mannan endo-1,4-beta-mannosidase A (606 aa).

A signal peptide spans 1–19 (MKSLNVILTLLSLIISVLS). The 119-residue stretch at 22-140 (VYYEAEDGKL…WMWVDAFVIN (119 aa)) folds into the CBM6 domain. The 295-residue stretch at 164-458 (PAAKKLYDFL…FNHKTVMNMD (295 aa)) folds into the GH26 domain. Tryptophan 285 contributes to the substrate binding site. Glutamate 318 serves as the catalytic Proton donor. The substrate site is built by tryptophan 323 and tyrosine 378. Glutamate 406 functions as the Nucleophile in the catalytic mechanism. Positions 472–489 (SGSSHNGNSESNSNTGNS) are linker. CBM10 domains lie at 491 to 527 (ECWS…CGIV), 530 to 566 (SCWS…CGIV), and 569 to 605 (SCWA…CGIL). Position 493 (tryptophan 493) interacts with substrate.

This sequence belongs to the glycosyl hydrolase 26 family.

It catalyses the reaction Random hydrolysis of (1-&gt;4)-beta-D-mannosidic linkages in mannans, galactomannans and glucomannans.. Functionally, hydrolyzes 1,4-beta linked polysaccharide backbones of mannans, one of the major hemicellulose components in hardwoods and softwoods. Shows very high activity against mannohexaose but not against mannopentaose and smaller mannooligosaccharides. The major products released from mannooligosaccharide hydrolysis are mannose and mannobiose. The reiterated 40 AA domain is involved in binding the cellulase-hemicellulase complex. The protein is Mannan endo-1,4-beta-mannosidase A (MANA) of Piromyces sp.